The sequence spans 237 residues: uncharacterized protein (237 aa).

The N-terminal stretch at 1 to 28 (MNRPLLSVAGSLFVAAWALYIFSCFQHG) is a signal peptide. The segment at 52 to 96 (NARDTAAHPSDTADNTSGSSTTTDPRSHGNAPPAPVGGAAQTHTQ) is disordered. Residues 63 to 75 (TADNTSGSSTTTD) show a composition bias toward polar residues.

This is an uncharacterized protein from Treponema pallidum (strain Nichols).